Here is a 503-residue protein sequence, read N- to C-terminus: uncharacterized protein (503 aa).

The protein belongs to the Mg-chelatase subunits D/I family. ComM subfamily.

This is an uncharacterized protein from Mycobacterium tuberculosis (strain CDC 1551 / Oshkosh).